Consider the following 137-residue polypeptide: Large ribosomal subunit protein uL16 (137 aa).

The protein belongs to the universal ribosomal protein uL16 family. In terms of assembly, part of the 50S ribosomal subunit.

Its function is as follows. Binds 23S rRNA and is also seen to make contacts with the A and possibly P site tRNAs. The polypeptide is Large ribosomal subunit protein uL16 (Bradyrhizobium sp. (strain ORS 278)).